The chain runs to 187 residues: Guanylate kinase (187 aa).

An N-acetylserine modification is found at serine 2. The Guanylate kinase-like domain maps to 2-184; it reads SRPIVISGPS…AYKELKDFIF (183 aa). 9 to 16 contacts ATP; the sequence is GPSGTGKS. GMP contacts are provided by residues serine 35, 39-42, tyrosine 51, glutamate 70, 79-81, and aspartate 101; these read RTPR and YGS. Serine 149 bears the Phosphoserine mark. A Phosphotyrosine modification is found at tyrosine 157.

It belongs to the guanylate kinase family. In terms of assembly, monomer.

The catalysed reaction is GMP + ATP = GDP + ADP. Functionally, catalyzes the reversible transfer of the terminal phosphoryl group of ATP to the acceptor molecule GMP. Essential for recycling GMP and indirectly, cGMP. In Saccharomyces cerevisiae (strain ATCC 204508 / S288c) (Baker's yeast), this protein is Guanylate kinase (GUK1).